A 717-amino-acid chain; its full sequence is Pentatricopeptide repeat-containing protein At1g53600, mitochondrial (717 aa).

A mitochondrion-targeting transit peptide spans M1 to S47. PPR repeat units lie at residues A49–R79, S80–R110, V111–K142, N143–K173, D176–K206, E207–T241, W242–K272, N274–F308, D309–K339, D340–S374, W375–K401, D402–P436, N437–N471, D472–P502, N503–P537, N538–S568, and G574–K604. The segment at V609–K684 is type E motif. Residues G685–E715 are type E(+) motif.

It belongs to the PPR family. PCMP-E subfamily.

The protein localises to the mitochondrion. In Arabidopsis thaliana (Mouse-ear cress), this protein is Pentatricopeptide repeat-containing protein At1g53600, mitochondrial (PCMP-E63).